The primary structure comprises 221 residues: Immediate early response gene 2 protein (221 aa).

Position 1 is an N-acetylmethionine (Met-1). The interval 54–156 (THQPEFPPSR…EGEATSEVSN (103 aa)) is disordered. Positions 64–77 (RALDPRLHPPREPE) are enriched in basic and acidic residues. Positions 125–136 (SDLSDGSDAGLV) are enriched in low complexity.

It belongs to the IER family.

Its subcellular location is the cytoplasm. The protein resides in the nucleus. Its function is as follows. DNA-binding protein that seems to act as a transcription factor. Involved in the regulation of neuronal differentiation, acts upon JNK-signaling pathway activation and plays a role in neurite outgrowth in hippocampal cells. May mediate with FIBP FGF-signaling in the establishment of laterality in the embryo. Promotes cell motility, seems to stimulate tumor metastasis. The chain is Immediate early response gene 2 protein (Ier2) from Rattus norvegicus (Rat).